Here is a 283-residue protein sequence, read N- to C-terminus: ATP phosphoribosyltransferase (283 aa).

This sequence belongs to the ATP phosphoribosyltransferase family. Long subfamily. Mg(2+) is required as a cofactor.

The protein resides in the cytoplasm. It catalyses the reaction 1-(5-phospho-beta-D-ribosyl)-ATP + diphosphate = 5-phospho-alpha-D-ribose 1-diphosphate + ATP. It participates in amino-acid biosynthesis; L-histidine biosynthesis; L-histidine from 5-phospho-alpha-D-ribose 1-diphosphate: step 1/9. Its activity is regulated as follows. Feedback inhibited by histidine. In terms of biological role, catalyzes the condensation of ATP and 5-phosphoribose 1-diphosphate to form N'-(5'-phosphoribosyl)-ATP (PR-ATP). Has a crucial role in the pathway because the rate of histidine biosynthesis seems to be controlled primarily by regulation of HisG enzymatic activity. This Bifidobacterium longum (strain DJO10A) protein is ATP phosphoribosyltransferase.